The following is a 220-amino-acid chain: Probable cutinase 5 (220 aa).

An N-terminal signal peptide occupies residues 1-18; the sequence is MVALHTLLLTAFAAVSLA. Cystine bridges form between cysteine 42–cysteine 121 and cysteine 68–cysteine 82. Residue serine 132 is the Nucleophile of the active site. An intrachain disulfide couples cysteine 183 to cysteine 190. Aspartate 187 is a catalytic residue. Catalysis depends on histidine 200, which acts as the Proton donor/acceptor.

Belongs to the cutinase family.

The protein resides in the secreted. It catalyses the reaction cutin + H2O = cutin monomers.. Functionally, catalyzes the hydrolysis of complex carboxylic polyesters found in the cell wall of plants. Degrades cutin, a macromolecule that forms the structure of the plant cuticle. In Aspergillus terreus (strain NIH 2624 / FGSC A1156), this protein is Probable cutinase 5.